Reading from the N-terminus, the 261-residue chain is Tryptophan synthase alpha chain (261 aa).

Catalysis depends on proton acceptor residues Glu-47 and Asp-58.

It belongs to the TrpA family. As to quaternary structure, tetramer of two alpha and two beta chains.

The enzyme catalyses (1S,2R)-1-C-(indol-3-yl)glycerol 3-phosphate + L-serine = D-glyceraldehyde 3-phosphate + L-tryptophan + H2O. Its pathway is amino-acid biosynthesis; L-tryptophan biosynthesis; L-tryptophan from chorismate: step 5/5. Its function is as follows. The alpha subunit is responsible for the aldol cleavage of indoleglycerol phosphate to indole and glyceraldehyde 3-phosphate. This chain is Tryptophan synthase alpha chain, found in Neisseria meningitidis serogroup B (strain ATCC BAA-335 / MC58).